The sequence spans 133 residues: Small ribosomal subunit protein bS6 (133 aa).

Belongs to the bacterial ribosomal protein bS6 family.

Binds together with bS18 to 16S ribosomal RNA. The sequence is that of Small ribosomal subunit protein bS6 from Chlorobium luteolum (strain DSM 273 / BCRC 81028 / 2530) (Pelodictyon luteolum).